The primary structure comprises 150 residues: UPF0178 protein Rru_A0086 (150 aa).

It belongs to the UPF0178 family.

In Rhodospirillum rubrum (strain ATCC 11170 / ATH 1.1.1 / DSM 467 / LMG 4362 / NCIMB 8255 / S1), this protein is UPF0178 protein Rru_A0086.